Consider the following 318-residue polypeptide: Probable RNA methyltransferase At5g51130 (318 aa).

2 disordered regions span residues 1–61 (MGRD…NQEV) and 146–184 (NSTKPSEKKSSSEGADGVHGSKEPSVSLSNGEAKADSAE). Positions 16-34 (RSNENEKSVEKVVANEEKV) are enriched in basic and acidic residues. Low complexity predominate over residues 37-52 (QQKQKQQQGQQGNCNQ). Residues 82-318 (DPRLKVLKKE…FDRQILAFQK (237 aa)) enclose the Bin3-type SAM domain.

Belongs to the methyltransferase superfamily.

In terms of biological role, probable RNA methyltransferase. The chain is Probable RNA methyltransferase At5g51130 from Arabidopsis thaliana (Mouse-ear cress).